Reading from the N-terminus, the 833-residue chain is MTFYDHTAIEPKWQAFWADNHTFKTGTDASKPKFYALDMFPYPSGAGLHVGHPEGYTATDILSRFKRAQGHNVLHPMGWDAFGLPAEQYAMDTGNDPAEFTAENIANFKRQINALGFSYDWDREVNTTDPNYYKWTQWIFTKLYEKGLAYEAEVPVNWVEELGTAIANEEVLPDGTSERGGYPVVRKPMRQWMLKITVYAERLLEDLEEVDWPESIKDMQRNWIGKSTGANVTFKVKDTDKNFTVFTTRPDTLFGATYAVLAPEHALVDAITTADQAEAVADYKRQASLKSDLARTDLAKEKTGVWTGSYAINPVNGKEIPVWIADYVLASYGTGAIMAVPAHDERDWEFAKQFNLDIIPVLEGGNVEEAAFTEDGLHINSGFLDGLDKASAIAKMVEWLEAEGVGNEKVTYRLRDWLFSRQRYWGEPIPIIHWEDGTSTAVPESELPLVLPVTKDIRPSGTGESPLANVTDWLEVTREDGVKGRRETNTMPQWAGSSWYYLRYIDPHNTEKLADEELLKQWLPVDIYVGGAEHAVLHLLYARFWHKVLYDLGVVPTKEPFQKLFNQGMILGTSYRDSRGALVATDKVEKRDGSFFHVETGEELEQAPAKMSKSLKNVVNPDDVVEQYGADTLRVYEMFMGPLDASIAWSEEGLEGSRKFLDRVYRLITTKEITEENSGALDKVYNETVKAVTEQVDQMKFNTAIAQLMVFVNAANKEDKLFSDYAKGFVQLIAPFAPHLGEELWQALTASGESISYVPWPSYDESKLVENDVEIVVQIKGKVKAKLVVAKDLSREELQEVALANEKVQAEIAGKDIIKVIAVPNKLVNIVIK.

Residues 41-52 carry the 'HIGH' region motif; sequence PYPSGAGLHVGH. The 'KMSKS' region motif lies at 610–614; sequence KMSKS. Lys-613 lines the ATP pocket.

The protein belongs to the class-I aminoacyl-tRNA synthetase family.

It localises to the cytoplasm. It carries out the reaction tRNA(Leu) + L-leucine + ATP = L-leucyl-tRNA(Leu) + AMP + diphosphate. The protein is Leucine--tRNA ligase of Streptococcus pyogenes serotype M3 (strain ATCC BAA-595 / MGAS315).